A 91-amino-acid polypeptide reads, in one-letter code: Protein SPATA45 homolog (91 aa).

The segment at 42 to 91 (RADRKHDPNGFNSSVFKGASNQHQESSLDFATAEPEFHRERRHFPEKSEY) is disordered. Polar residues predominate over residues 51 to 70 (GFNSSVFKGASNQHQESSLD). Over residues 76 to 91 (PEFHRERRHFPEKSEY) the composition is skewed to basic and acidic residues.

The protein belongs to the SPATA45 family.

The polypeptide is Protein SPATA45 homolog (Nematostella vectensis (Starlet sea anemone)).